A 206-amino-acid polypeptide reads, in one-letter code: Small ribosomal subunit protein uS4 (206 aa).

The 61-residue stretch at Thr-96–Lys-156 folds into the S4 RNA-binding domain.

This sequence belongs to the universal ribosomal protein uS4 family. In terms of assembly, part of the 30S ribosomal subunit. Contacts protein S5. The interaction surface between S4 and S5 is involved in control of translational fidelity.

In terms of biological role, one of the primary rRNA binding proteins, it binds directly to 16S rRNA where it nucleates assembly of the body of the 30S subunit. Functionally, with S5 and S12 plays an important role in translational accuracy. This Shewanella amazonensis (strain ATCC BAA-1098 / SB2B) protein is Small ribosomal subunit protein uS4.